Here is a 359-residue protein sequence, read N- to C-terminus: Biotin synthase (359 aa).

The region spanning 67-302 (CCGNRVDLCS…QQILRYAGGR (236 aa)) is the Radical SAM core domain. The [4Fe-4S] cluster site is built by C85, C89, and C92. [2Fe-2S] cluster-binding residues include C130, C167, C227, and R297.

Belongs to the radical SAM superfamily. Biotin synthase family. Homodimer. Requires [4Fe-4S] cluster as cofactor. [2Fe-2S] cluster is required as a cofactor.

It catalyses the reaction (4R,5S)-dethiobiotin + (sulfur carrier)-SH + 2 reduced [2Fe-2S]-[ferredoxin] + 2 S-adenosyl-L-methionine = (sulfur carrier)-H + biotin + 2 5'-deoxyadenosine + 2 L-methionine + 2 oxidized [2Fe-2S]-[ferredoxin]. It participates in cofactor biosynthesis; biotin biosynthesis; biotin from 7,8-diaminononanoate: step 2/2. Catalyzes the conversion of dethiobiotin (DTB) to biotin by the insertion of a sulfur atom into dethiobiotin via a radical-based mechanism. This Gloeothece citriformis (strain PCC 7424) (Cyanothece sp. (strain PCC 7424)) protein is Biotin synthase.